Reading from the N-terminus, the 598-residue chain is Integrator complex subunit 11 (598 aa).

Residues H68, H70, D72, H73, H157, and D178 each coordinate Zn(2+). The HXHXDH motif signature appears at 68 to 73 (HFHLDH). E203 is an active-site residue. Zn(2+) is bound at residue H414. The short motif at 470-480 (PLPDAKRPRTM) is the Nuclear localization signal element.

It belongs to the metallo-beta-lactamase superfamily. RNA-metabolizing metallo-beta-lactamase-like family. INTS11 subfamily. Component of the Integrator complex, composed of core subunits INTS1, INTS2, INTS3, INTS4, INTS5, INTS6, INTS7, INTS8, INTS9/RC74, INTS10, INTS11/CPSF3L, INTS12, INTS13, INTS14 and INTS15. The core complex associates with protein phosphatase 2A subunits PPP2CA and PPP2R1A, to form the Integrator-PP2A (INTAC) complex. INTS11 is part of the RNA endonuclease subcomplex, composed of INTS4, INTS9, INTS11 and inositol hexakisphosphate (InsP6). Zn(2+) is required as a cofactor.

Its subcellular location is the nucleus. The protein localises to the cytoplasm. In terms of biological role, RNA endonuclease component of the integrator complex, a multiprotein complex that terminates RNA polymerase II (Pol II) transcription in the promoter-proximal region of genes. The integrator complex provides a quality checkpoint during transcription elongation by driving premature transcription termination of transcripts that are unfavorably configured for transcriptional elongation: the complex terminates transcription by (1) catalyzing dephosphorylation of the C-terminal domain (CTD) of Pol II subunit POLR2A/RPB1 and SUPT5H/SPT5, (2) degrading the exiting nascent RNA transcript via endonuclease activity and (3) promoting the release of Pol II from bound DNA. The integrator complex is also involved in terminating the synthesis of non-coding Pol II transcripts, such as enhancer RNAs (eRNAs), small nuclear RNAs (snRNAs), telomerase RNAs and long non-coding RNAs (lncRNAs). Within the integrator complex, INTS11 constitutes the RNA endonuclease subunit that degrades exiting nascent RNA transcripts. The protein is Integrator complex subunit 11 (cpsf3l) of Danio rerio (Zebrafish).